Reading from the N-terminus, the 352-residue chain is Sodium-lithium/proton antiporter (352 aa).

Transmembrane regions (helical) follow at residues 11 to 31 (ILLLLGILFVVAGYFILPVSV), 32 to 52 (PLIIALITALFLNPAVRWMQF), 61 to 81 (AVTIVFLLFVIMIGLLGTYAV), 159 to 179 (IPEYLISFLVYLIALFLFMLE), 216 to 236 (AQFLVSIVIFVVCLIGLFWIT), 241 to 261 (IVMSLIIWIVDFVPIIGSIVI), 271 to 291 (IVGDIAMGGQLAMLAIILLAI), and 317 to 337 (IGLQLIGLMGFILGPLLVIAF).

It belongs to the autoinducer-2 exporter (AI-2E) (TC 2.A.86) family.

It is found in the cell membrane. Functionally, catalyzes the pH-dependent efflux of sodium and lithium in exchange for external protons. This is Sodium-lithium/proton antiporter from Halobacillus andaensis.